The sequence spans 952 residues: Leucine--tRNA ligase (952 aa).

The short motif at 66-77 is the 'HIGH' region element; it reads PYPSGAGLHVGH. The short motif at 722 to 726 is the 'KMSKS' region element; that stretch reads KMGKS. K725 lines the ATP pocket.

This sequence belongs to the class-I aminoacyl-tRNA synthetase family.

The protein localises to the cytoplasm. It catalyses the reaction tRNA(Leu) + L-leucine + ATP = L-leucyl-tRNA(Leu) + AMP + diphosphate. This is Leucine--tRNA ligase from Corynebacterium glutamicum (strain R).